The sequence spans 301 residues: tRNA dimethylallyltransferase (301 aa).

ATP is bound at residue 9-16; it reads GPTASGKS. 11–16 serves as a coordination point for substrate; sequence TASGKS. The tract at residues 34 to 37 is interaction with substrate tRNA; that stretch reads DSMQ.

Belongs to the IPP transferase family. In terms of assembly, monomer. Requires Mg(2+) as cofactor.

The enzyme catalyses adenosine(37) in tRNA + dimethylallyl diphosphate = N(6)-dimethylallyladenosine(37) in tRNA + diphosphate. Catalyzes the transfer of a dimethylallyl group onto the adenine at position 37 in tRNAs that read codons beginning with uridine, leading to the formation of N6-(dimethylallyl)adenosine (i(6)A). This Corynebacterium efficiens (strain DSM 44549 / YS-314 / AJ 12310 / JCM 11189 / NBRC 100395) protein is tRNA dimethylallyltransferase.